The following is a 66-amino-acid chain: uncharacterized protein (66 aa).

The HTH cro/C1-type domain maps to 5–59; the sequence is VKELRARFGYSQEKLGETVGVTRQTVAAIEKGDYVPSLLLALKICKAFSMKMEDV. The H-T-H motif DNA-binding region spans 16 to 35; the sequence is QEKLGETVGVTRQTVAAIEK.

This is an uncharacterized protein from Bacillus subtilis (strain 168).